Reading from the N-terminus, the 1325-residue chain is Bile salt export pump (1325 aa).

Residues 1 to 62 lie on the Cytoplasmic side of the membrane; sequence MSDAVILRSV…FSSTTDIWLM (62 aa). The 324-residue stretch at 62 to 385 folds into the ABC transmembrane type-1 1 domain; the sequence is MFVGSLCAFL…ASSCLEAFAT (324 aa). A helical membrane pass occupies residues 63–83; it reads FVGSLCAFLHGLSHPGVLLIF. The Extracellular segment spans residues 84–147; that stretch reads GTMTDVFIAY…MIKFASYYAG (64 aa). Asn-109, Asn-116, Asn-122, and Asn-125 each carry an N-linked (GlcNAc...) asparagine glycan. Residues 148–168 form a helical membrane-spanning segment; sequence IALLVLITGYIQICFWVIAAA. Topologically, residues 169–240 are cytoplasmic; that stretch reads RQIQKMRKIS…FLLGFYQGWK (72 aa). Residues 241–261 traverse the membrane as a helical segment; it reads LTLVIISVSPLIGIGAAIIGL. The Extracellular segment spans residues 262–319; it reads SVSKFTDYELKAYAKAGSVADEVISSMRTVAAFGGEKKEVERYEKNLVFAQRWGIRKG. Residues 320 to 340 traverse the membrane as a helical segment; it reads IVMGFFTGFMWCLIFLCYALA. Topologically, residues 341-353 are cytoplasmic; sequence FWYGSKLVLEDGE. Residues 354–374 form a helical membrane-spanning segment; sequence YTAGTLVQIFLSILLGALNLG. 3 N-linked (GlcNAc...) asparagine glycosylation sites follow: Asn-375, Asn-424, and Asn-440. The Extracellular segment spans residues 375–759; the sequence is NASSCLEAFA…KFNAPEWPYM (385 aa). An ABC transporter 1 domain is found at 420–656; sequence IEFHNVTFHY…KGVYFTLVTL (237 aa). ATP is bound at residue 455–462; that stretch reads GSSGSGKS. Residue Asn-591 is glycosylated (N-linked (GlcNAc...) asparagine). The 289-residue stretch at 759 to 1047 folds into the ABC transmembrane type-1 2 domain; it reads MLFGAVGAAV…ASSYTPSYAK (289 aa). Residues 760 to 780 traverse the membrane as a helical segment; it reads LFGAVGAAVNGSVTPLYAFLF. Topologically, residues 781-798 are cytoplasmic; sequence SQILGTFSLPDKEEQRSQ. A helical transmembrane segment spans residues 799 to 819; sequence INGVCLLFVAVGCVSLCTQFL. The Extracellular portion of the chain corresponds to 820–894; sequence QGYAFAKSGE…NSFTNVTVAM (75 aa). A glycan (N-linked (GlcNAc...) asparagine) is linked at Asn-889. Residues 895 to 915 traverse the membrane as a helical segment; the sequence is IIAFFFSWKLSLVIMCFFPFL. The Cytoplasmic portion of the chain corresponds to 916–983; that stretch reads ALSGALQTRM…PFKTAFRKAN (68 aa). Residues 984–1004 traverse the membrane as a helical segment; it reads VYGFCFGFSQCIVFVANSASY. At 1005–1014 the chain is on the extracellular side; it reads RYGGYLIPNE. Residues 1015-1035 form a helical membrane-spanning segment; sequence GLHFSYVFRVISSVVLSATAL. The Cytoplasmic portion of the chain corresponds to 1036–1325; the sequence is GRASSYTPSY…KLVTTGAPIS (290 aa). One can recognise an ABC transporter 2 domain in the interval 1082–1320; that stretch reads VDFVDCKFTY…KGAYYKLVTT (239 aa). 1117-1124 lines the ATP pocket; the sequence is GSSGCGKS.

It belongs to the ABC transporter superfamily. ABCB family. Multidrug resistance exporter (TC 3.A.1.201) subfamily. Interacts with HAX1. Interacts with the adapter protein complex 2 (AP-2) throught AP2A2 or AP2A1; this interaction regulates cell membrane expression of ABCB11 through its internalization in a clathrin-dependent manner and its subsequent degradation. In terms of processing, N-glycosylated. Post-translationally, ubiquitinated; short-chain ubiquitination regulates cell-Surface expression of ABCB11. As to expression, liver.

The protein resides in the apical cell membrane. It localises to the recycling endosome membrane. Its subcellular location is the endosome. The protein localises to the cell membrane. The enzyme catalyses cholate(in) + ATP + H2O = cholate(out) + ADP + phosphate + H(+). It carries out the reaction taurocholate(in) + ATP + H2O = taurocholate(out) + ADP + phosphate + H(+). It catalyses the reaction glycocholate(in) + ATP + H2O = glycocholate(out) + ADP + phosphate + H(+). The catalysed reaction is glycochenodeoxycholate(in) + ATP + H2O = glycochenodeoxycholate(out) + ADP + phosphate + H(+). The enzyme catalyses taurochenodeoxycholate(in) + ATP + H2O = taurochenodeoxycholate(out) + ADP + phosphate + H(+). It carries out the reaction glycoursodeoxycholate(in) + ATP + H2O = glycoursodeoxycholate(out) + ADP + phosphate + H(+). It catalyses the reaction tauroursodeoxycholate(in) + ATP + H2O = tauroursodeoxycholate(out) + ADP + phosphate + H(+). The catalysed reaction is taurodeoxycholate(in) + ATP + H2O = taurodeoxycholate(out) + ADP + phosphate + H(+). The enzyme catalyses taurolithocholate 3-sulfate(in) + ATP + H2O = taurolithocholate 3-sulfate(out) + ADP + phosphate + H(+). It carries out the reaction pravastatin(in) + ATP + H2O = pravastatin(out) + ADP + phosphate + H(+). With respect to regulation, the uptake of taurocholate is inhibited by taurolithocholate sulfate with an IC(50) of 9 uM. Pravastatin competitively inhibits the transport of taurocholic acid. Cyclosporin A, glibenclamide, rifampicin and troglitazonestrongly competitively inhibit the transport activity of taurocholate. The canalicular transport activity of taurocholate is strongly dependent on canalicular membrane cholesterol content. The uptake of taurocholate is increased by short- and medium-chain fatty acids. Cholesterol increases transport capacity of taurocholate without affecting the affinity for the substrate. Catalyzes the transport of the major hydrophobic bile salts, such as taurine and glycine-conjugated cholic acid across the canalicular membrane of hepatocytes in an ATP-dependent manner, therefore participates in hepatic bile acid homeostasis and consequently to lipid homeostasis through regulation of biliary lipid secretion in a bile salts dependent manner. Transports taurine-conjugated bile salts more rapidly than glycine-conjugated bile salts. Also transports non-bile acid compounds, such as pravastatin and fexofenadine in an ATP-dependent manner and may be involved in their biliary excretion. This Canis lupus familiaris (Dog) protein is Bile salt export pump.